Consider the following 361-residue polypeptide: MKFGWIKTTGNDSEERIDSVKDALESSIPGILVKREEINSVRELGNIKIVSDSLDADVVLINKGEDLEILKSAKLSGKETAVYVVINTKDDEIYATEVSKLDFVDYVILEGSDWTIIPLENIIADLFGEEIKLVSVVTNVKDAEAAYEILEKGVDGVVLIPKDINEVKDFSKLIERMNSESVKLDYATVTKIEPVGSGDRVCIDTCSMMEMGEGMLIGSYSRGMFLVHSETVENPYVATRPFRVNAGPVHAYILCPENKTKYLSDLKAGDKVLVVNKNGETRESIIGRVKIEKRPLFLVEAEYNGENLRTILQNAETIRLVGEDGKPVSVVDLKVGTKVLIKPDENARHFGMAIKETIIEK.

It belongs to the archaeal-type DHQ synthase family.

It catalyses the reaction 2-amino-2,3,7-trideoxy-D-lyxo-hept-6-ulosonate + NAD(+) + H2O = 3-dehydroquinate + NH4(+) + NADH + H(+). In terms of biological role, catalyzes the oxidative deamination and cyclization of 2-amino-3,7-dideoxy-D-threo-hept-6-ulosonic acid (ADH) to yield 3-dehydroquinate (DHQ), which is fed into the canonical shikimic pathway of aromatic amino acid biosynthesis. In Methanococcus maripaludis (strain C7 / ATCC BAA-1331), this protein is 3-dehydroquinate synthase.